We begin with the raw amino-acid sequence, 1132 residues long: MATKSKSSVRGSIDDVLDDLLGYDDEGPAKSSQPAGVSSGRARGSSLQASKKSFLEDDFFSKLPAEDMEAAEGSSISDADPQAVLQTLKEMDDMEADLLGMSKPSSGLGKAATKGPGKFSTSEGAVKTSGKMPAPEKGESAPEMDKKPLSSPPTSRQYRKFNFEDVDDPLAGLLSEEEQDAPRKPSPKGSERRPERKTELGKEKDPLPPQTPLHTTAPARRREELTFEDDDDDMMDVLGFGDGQKGDQKHGKKAEEEEVRPARSKLDELLGRGSVAKILERPGAGEHREFKLDKKYQKQPEKEEGWDEEDFVFGAYQPTVATTPEGRPSRRQSVSRFSAENSSEPKPDPHSKPPPAASQSPARGSRAGGDWLGLKDEDFLDSEPPSPAKTSPVVSSQQLLAKEQATSKPNQLEEDNWLSAALSRKKAQAQVKAQERGAVPLETTGKGLDPSPAVSQPATSTGAAAQAAALQDKAASADSSGHPVPWLSTVTQTSAHPPEPAKRDPLRDVSPSDPAASSPAEQGMQGPAPLAQVTMPSTPLQAASQLQAESPPLGSVHERRPGAPTGQSYEDATGCRAALLSAQARVAELESQVRMLELERTQHKLLLESLQQRHQEDLDLLESAHRSRVKVVEETYGQREERLRREKEQLEAQLLSQSQDAERARADLVAQHKQRVATLEQQSAQELERLRELQRSSVQEMLKDHEEQLQRLKRLKDQEIDAVTSATSHTRSLNGVIEQMERFSSDLHSLSHKVEATHHTTSQELAMGARQRDEQLKVLQDRLSQQQRDMEEERSRLQEVIAKMEARLSEQTRLLEQERWRVTAVQSKVESLQRSLEEQRRLMTQQLSMERAELERAKSALLEEQKSVMQKCSEERRKLAVEWAEFHTQQQLSKERMERDIDRALQLDSQREGTIMSLAKEQAELKVRSRELKVKEEQLARDRLLLDEAWHELRLEKEKVKGATLRIRQQEEEIKNMSKLSAQKYEEGERALQDACRIESEHQARLQVMQQHLEQLKQQEQHLQQERLSMAHQRRQLEQLHKKLPNNPTLLLTTDQDLSASTKGLSSTLSFPPPIRTLPGHRSVGTTASMELYAKLLVLKHRAQQDRNFLEDEQLFLETLKKASYNTSPLSV.

Disordered stretches follow at residues 18 to 50 (DDLL…LQAS), 65 to 84 (AEDM…PQAV), and 89 to 570 (KEMD…QSYE). Over residues 35–46 (AGVSSGRARGSS) the composition is skewed to low complexity. Basic and acidic residues-rich tracts occupy residues 134-148 (APEK…DKKP) and 189-206 (GSER…EKDP). Over residues 226–235 (TFEDDDDDMM) the composition is skewed to acidic residues. Basic and acidic residues-rich tracts occupy residues 244–270 (QKGD…DELL) and 278–303 (ILER…PEKE). Composition is skewed to polar residues over residues 331-341 (RQSVSRFSAEN) and 388-410 (AKTS…SKPN). Composition is skewed to low complexity over residues 458–480 (ATST…ADSS) and 511–520 (PSDPAASSPA). Polar residues predominate over residues 534–548 (TMPSTPLQAASQLQA). Coiled coils occupy residues 576–727 (RAAL…TSAT), 769–882 (ARQR…LAVE), and 918–1044 (LAKE…HKKL).

It is found in the cytoplasm. Its subcellular location is the cytoskeleton. The protein localises to the microtubule organizing center. It localises to the centrosome. The protein resides in the centriole. It is found in the spindle pole. Its subcellular location is the cell junction. Its function is as follows. Keratin-binding protein required for epithelial cell polarization. Required for ciliogenesis. The protein is Fas-binding factor 1 homolog (FBF1) of Gallus gallus (Chicken).